The chain runs to 157 residues: Serine-protein kinase RsbW (157 aa).

This sequence belongs to the anti-sigma-factor family.

It carries out the reaction L-seryl-[protein] + ATP = O-phospho-L-seryl-[protein] + ADP + H(+). The enzyme catalyses L-threonyl-[protein] + ATP = O-phospho-L-threonyl-[protein] + ADP + H(+). Functionally, negative regulator of sigma-B activity. Phosphorylates and inactivates its specific antagonist protein, RsbV. Upon phosphorylation of RsbV, RsbW is released and binds to sigma-B, thereby blocking its ability to form an RNA polymerase holoenzyme (E-sigma-B). This Listeria monocytogenes serovar 1/2a (strain ATCC BAA-679 / EGD-e) protein is Serine-protein kinase RsbW.